A 214-amino-acid polypeptide reads, in one-letter code: Adenylate kinase (214 aa).

ATP is bound at residue 10-15 (GAGKGT). An NMP region spans residues 30–59 (STGDMLRAAVKAGTPLGLEAKKVMDAGQLV). AMP contacts are provided by residues threonine 31, arginine 36, 57-59 (QLV), 85-88 (GFPR), and glutamine 92. The interval 122–159 (GRRVHPGSGRVYHVVFNPPKVEGKDDVTGEDLAIRPDD) is LID. Residues arginine 123 and 132–133 (VY) each bind ATP. Arginine 156 and arginine 167 together coordinate AMP. Residue glutamine 200 coordinates ATP.

This sequence belongs to the adenylate kinase family. Monomer.

Its subcellular location is the cytoplasm. The catalysed reaction is AMP + ATP = 2 ADP. The protein operates within purine metabolism; AMP biosynthesis via salvage pathway; AMP from ADP: step 1/1. Its function is as follows. Catalyzes the reversible transfer of the terminal phosphate group between ATP and AMP. Plays an important role in cellular energy homeostasis and in adenine nucleotide metabolism. The chain is Adenylate kinase from Shewanella baltica (strain OS155 / ATCC BAA-1091).